A 103-amino-acid chain; its full sequence is Small ribosomal subunit protein uS10 (103 aa).

Belongs to the universal ribosomal protein uS10 family. In terms of assembly, part of the 30S ribosomal subunit.

In terms of biological role, involved in the binding of tRNA to the ribosomes. This Paraburkholderia xenovorans (strain LB400) protein is Small ribosomal subunit protein uS10.